The chain runs to 222 residues: Peptide methionine sulfoxide reductase MsrA (222 aa).

Residue cysteine 60 is part of the active site.

It belongs to the MsrA Met sulfoxide reductase family.

The catalysed reaction is L-methionyl-[protein] + [thioredoxin]-disulfide + H2O = L-methionyl-(S)-S-oxide-[protein] + [thioredoxin]-dithiol. It catalyses the reaction [thioredoxin]-disulfide + L-methionine + H2O = L-methionine (S)-S-oxide + [thioredoxin]-dithiol. In terms of biological role, has an important function as a repair enzyme for proteins that have been inactivated by oxidation. Catalyzes the reversible oxidation-reduction of methionine sulfoxide in proteins to methionine. This is Peptide methionine sulfoxide reductase MsrA from Pseudomonas putida (strain W619).